Consider the following 99-residue polypeptide: Fetal and adult testis-expressed transcript protein homolog (99 aa).

The chain crosses the membrane as a helical span at residues 79–98 (AALFTLLVSVCIANLWLWVH).

Interacts with BIK and RNF183. Interacts with IMMT/MIC60and EMD.

The protein resides in the mitochondrion. The protein localises to the mitochondrion outer membrane. It is found in the endoplasmic reticulum membrane. Its function is as follows. Involved in the regulation of endoplasmic reticulum (ER)-mitochondria coupling. Negatively regulates the ER-mitochondria distance and Ca(2+) transfer from ER to mitochondria possibly implicating it in the regulation of apoptosis. May collaborate with RNF183 to restrain BIK protein levels thus regulating apoptotic signaling. The polypeptide is Fetal and adult testis-expressed transcript protein homolog (Fate1) (Mus musculus (Mouse)).